A 147-amino-acid chain; its full sequence is 3-hydroxyacyl-[acyl-carrier-protein] dehydratase FabZ (147 aa).

H53 is an active-site residue.

This sequence belongs to the thioester dehydratase family. FabZ subfamily.

It is found in the cytoplasm. The enzyme catalyses a (3R)-hydroxyacyl-[ACP] = a (2E)-enoyl-[ACP] + H2O. Involved in unsaturated fatty acids biosynthesis. Catalyzes the dehydration of short chain beta-hydroxyacyl-ACPs and long chain saturated and unsaturated beta-hydroxyacyl-ACPs. The protein is 3-hydroxyacyl-[acyl-carrier-protein] dehydratase FabZ of Synechococcus sp. (strain WH7803).